The primary structure comprises 158 residues: Protein Smg homolog (158 aa).

Belongs to the Smg family.

This chain is Protein Smg homolog, found in Pseudoalteromonas atlantica (strain T6c / ATCC BAA-1087).